The sequence spans 318 residues: MGIFKAKNPCTKNTIFTTSNTLIYGGFMISLNDFYEQICRKRRDLAYHMSECEWAVDTDVLEEDHPEIRIELGRMREQFWSSEKIGTRVRLYSCDVPWETRHHTVNGQLEIKEEYTELYDPAQECWKNLSSNLTKETFLPLVIEPFSINDIFKAHLMFASISFFWGKSIMSENENVAFKAFHRAAELFDKCIGMTWFNISVCNQKKLSEVRRSAGKKGGKSKAEVYHIIQLKLVELINDSVPNDGWKNKVVAVNELIEPLWDFIQMSEFEINNQNKKYRVATMSQDALVDTILNQWSLKNEDVKQAFDSAVRRKKRSK.

This is an uncharacterized protein from Escherichia coli (strain K12).